The primary structure comprises 405 residues: Tryptophan synthase beta chain (405 aa).

An N6-(pyridoxal phosphate)lysine modification is found at lysine 98.

This sequence belongs to the TrpB family. As to quaternary structure, tetramer of two alpha and two beta chains. It depends on pyridoxal 5'-phosphate as a cofactor.

It carries out the reaction (1S,2R)-1-C-(indol-3-yl)glycerol 3-phosphate + L-serine = D-glyceraldehyde 3-phosphate + L-tryptophan + H2O. The protein operates within amino-acid biosynthesis; L-tryptophan biosynthesis; L-tryptophan from chorismate: step 5/5. Its function is as follows. The beta subunit is responsible for the synthesis of L-tryptophan from indole and L-serine. The polypeptide is Tryptophan synthase beta chain (Xylella fastidiosa (strain M12)).